The sequence spans 1017 residues: Voltage-gated delayed rectifier potassium channel KCNH4 (1017 aa).

Residues 1–232 are Cytoplasmic-facing; the sequence is MPVMKGLLAP…YSIPKAVWDG (232 aa). One can recognise a PAS domain in the interval 14–90; that stretch reads FLDTIATRFD…QRLQKALEGH (77 aa). In terms of domain architecture, PAC spans 93-145; sequence HRAEICFYRKDGSAFWCLLDMMPIKNELGEVVLFLFSFKDISQSGGPGLGSPG. A disordered region spans residues 139–170; sequence PGLGSPGIHGDNNNHENSLGRRGASSRLRSTR. A helical membrane pass occupies residues 233–253; the sequence is LILLATFYVAVTVPYNVCFAG. At 254-262 the chain is on the extracellular side; it reads DDDTPITSR. A helical membrane pass occupies residues 263–283; that stretch reads HTLVSDIAVEMLFILDIILNF. Topologically, residues 284-305 are cytoplasmic; that stretch reads RTTYVSQSGQVVSAPRSIGLHY. A helical transmembrane segment spans residues 306–326; sequence LATWFFVDLIAALPFDLLYVF. At 327-334 the chain is on the extracellular side; it reads NITVTSLV. The chain crosses the membrane as a helical; Voltage-sensor span at residues 335 to 355; sequence HLLKTVRLLRLLRLLQKLERY. At 356–364 the chain is on the cytoplasmic side; it reads SQCSAVVLT. Residues 365–385 traverse the membrane as a helical segment; that stretch reads LLMSVFALLAHWMACVWYVIG. Topologically, residues 386-427 are extracellular; sequence RREMEANDPLLWDIGWLHELGKRLEEPYVNGSAGGPSRRSAY. Asn415 carries an N-linked (GlcNAc...) asparagine glycan. Residues 428-448 constitute an intramembrane region (pore-forming); that stretch reads IAALYFTLSSLTSVGFGNVCA. The Selectivity filter signature appears at 440–445; sequence SVGFGN. Residues 449-454 lie on the Extracellular side of the membrane; sequence NTDAEK. The helical transmembrane segment at 455-475 threads the bilayer; the sequence is IFSICTMLIGALMHAVVFGNV. The Cytoplasmic portion of the chain corresponds to 476 to 1017; sequence TAIIQRMYSR…SFQSGSDTFH (542 aa). The cNMP-binding domain stretch occupies residues 557 to 621; sequence LFGAASRGCL…AILGKGDLIG (65 aa). Disordered stretches follow at residues 690–749 and 771–870; these read GSEN…PNLS and LVSS…ELAT. Positions 703–726 are enriched in polar residues; sequence PRLSQARSDTLGSSSDKTLPSITE. Low complexity-rich tracts occupy residues 771 to 786 and 806 to 820; these read LVSSPSLSPTPSPALA and PPQLLTPPLGTFGPP. Residues 873 to 907 adopt a coiled-coil conformation; it reads AEEVKEKVCRLNQEISRLNQEVSQLSRELRQVMGL. Positions 972-1017 are disordered; that stretch reads SELRSSMVPPFPSEPDPLGPSPVPEASPLTPSLLKHSFQSGSDTFH. Over residues 980 to 996 the composition is skewed to pro residues; it reads PPFPSEPDPLGPSPVPE. The span at 1008–1017 shows a compositional bias: polar residues; the sequence is SFQSGSDTFH.

This sequence belongs to the potassium channel family. H (Eag) (TC 1.A.1.20) subfamily. Kv12.3/KCNH4 sub-subfamily. The potassium channel is probably composed of a homo- or heterotetrameric complex of pore-forming alpha subunits that can associate with modulating beta subunits. Highly expressed in adult testis, and in adult and embryonic brain. In adult brain found in piriform cortex, olfactory tubercle, cerebral cortex, hippocampus pyramidial cells and dentate gyrus and basal ganglia of caudate/putamen and accumbens nucleus. Detected at intermediate levels in lung, spinal cord, and pituitary.

It is found in the membrane. The enzyme catalyses K(+)(in) = K(+)(out). Pore-forming (alpha) subunit of a voltage-gated delayed rectifier. Activates at more negative voltages, exhibits fast prepulse-independent activation kinetics and deactivates much more slowly, but shows no inactivation. The protein is Voltage-gated delayed rectifier potassium channel KCNH4 of Rattus norvegicus (Rat).